The chain runs to 303 residues: Phosphate import ATP-binding protein PstB (303 aa).

Positions 56-298 (LSTSDVHVYY…PDHQLTEAYI (243 aa)) constitute an ABC transporter domain. Residue 88-95 (GPSGCGKS) coordinates ATP.

The protein belongs to the ABC transporter superfamily. Phosphate importer (TC 3.A.1.7) family. In terms of assembly, the complex is composed of two ATP-binding proteins (PstB), two transmembrane proteins (PstC and PstA) and a solute-binding protein (PstS).

The protein resides in the cell inner membrane. The enzyme catalyses phosphate(out) + ATP + H2O = ADP + 2 phosphate(in) + H(+). Its function is as follows. Part of the ABC transporter complex PstSACB involved in phosphate import. Responsible for energy coupling to the transport system. The polypeptide is Phosphate import ATP-binding protein PstB (Acinetobacter baylyi (strain ATCC 33305 / BD413 / ADP1)).